Consider the following 810-residue polypeptide: MPQSSPSAAATASDMDKNSGSSSSSASSGSSKGQQPPRSASAGPAGESKPKSDGKNSSGSKRYNRKREPSYPKNENFINQSRRSNSQKSKTFNKMPPQRGGGSSKLFSSSFNGGRRDEVAEAQRAEFSPAQFSGPKKINLNHLLNFTFEPRGQAGHFEGSGHGSWGKRNKWGHKPFNKELFLQANCQFVVSEDQDYTVHFADPDTLVNWDFVEQVRICSHEVPSCPICLYPPTAAKITRCGHIFCWACILHYLSLSEKTWSKCPICYSSVHKKDLKSVVATESRQYVVGDTITMQLMKREKGVLVALPKSKWMNVDHPIHLGDEQHSQYSKLLLASKEQVLRRVVQEEKAALERQLAEEKHTPESCFIEAAIQELKAREEALSGLAESRGEVPGVVAALEQRVLMAPLAKESVFQPRKGVLEYLSAFDEDATEVCSLGPPHPVALPLVEEEETVSEPEPEGLSEACEDLELVEDNLGEGTICTESSQQEPVSKPSVTHLSSSPCYYFYQAEDGQHMFLHPVNVRCLVREYGSLEQSPEKISATVVEISGYSMSEDMRQRHRYLSHLPLTCEFSICELALQPPLVSKETLEIFSDDIEKRKRQRQKKAREERRRERRIEMEENKKQGKYPEVHIPLENLQQFPAFNSYTCSSDSALGSTSTEGRGALSLSPLSRSPGSQADFLLTPLSPTASQGSPSFCVGSLEEDSPFPSFAQMLRVGKAKADVWPKTAPKKDENTLGPPAPVDSDGESDNSDRVPVPSFQNSFSQAIEAAFMKLDTPVTSDPLSEEKGGKKRKKQKQKLLFSTSVVHTK.

Residues 1-31 show a composition bias toward low complexity; sequence MPQSSPSAAATASDMDKNSGSSSSSASSGSS. The tract at residues 1–119 is disordered; sequence MPQSSPSAAA…SFNGGRRDEV (119 aa). At Ser-5 the chain carries Phosphoserine. Residues 76–92 are compositionally biased toward polar residues; the sequence is NFINQSRRSNSQKSKTF. The tract at residues 101-185 is interaction with MEOX2; it reads GGSSKLFSSS…FNKELFLQAN (85 aa). Residues 104 to 113 show a composition bias toward low complexity; sequence SKLFSSSFNG. A phosphoserine mark is found at Ser-110 and Ser-128. Residues 225-267 form an RING-type zinc finger; sequence CPICLYPPTAAKITRCGHIFCWACILHYLSLSEKTWSKCPICY. Disordered regions lie at residues 598–623, 652–674, 722–759, and 775–810; these read KRKR…EENK, DSAL…LSRS, ADVW…PVPS, and LDTP…VHTK. The span at 607–623 shows a compositional bias: basic and acidic residues; that stretch reads AREERRRERRIEMEENK. Positions 652–661 are enriched in polar residues; the sequence is DSALGSTSTE. Residues 662–674 show a composition bias toward low complexity; the sequence is GRGALSLSPLSRS. The span at 722-735 shows a compositional bias: basic and acidic residues; that stretch reads ADVWPKTAPKKDEN. Polar residues predominate over residues 801 to 810; it reads LFSTSVVHTK.

Belongs to the RNF10 family. Interacts with MEOX2.

It is found in the cytoplasm. Its subcellular location is the nucleus. The enzyme catalyses S-ubiquitinyl-[E2 ubiquitin-conjugating enzyme]-L-cysteine + [acceptor protein]-L-lysine = [E2 ubiquitin-conjugating enzyme]-L-cysteine + N(6)-ubiquitinyl-[acceptor protein]-L-lysine.. The protein operates within protein modification; protein ubiquitination. In terms of biological role, E3 ubiquitin-protein ligase that catalyzes monoubiquitination of 40S ribosomal proteins RPS2/us5 and RPS3/us3 in response to ribosome stalling. Part of a ribosome quality control that takes place when ribosomes have stalled during translation initiation (iRQC): RNF10 acts by mediating monoubiquitination of RPS2/us5 and RPS3/us3, promoting their degradation by the proteasome. Also promotes ubiquitination of 40S ribosomal proteins in response to ribosome stalling during translation elongation. The action of RNF10 in iRQC is counteracted by USP10. May also act as a transcriptional factor involved in the regulation of MAG (Myelin-associated glycoprotein) expression. Acts as a regulator of Schwann cell differentiation and myelination. The chain is E3 ubiquitin-protein ligase RNF10 (RNF10) from Bos taurus (Bovine).